Consider the following 299-residue polypeptide: Probable lipid kinase YegS (299 aa).

Residues 2-133 form the DAGKc domain; it reads AEFPASLLIL…IDMAQVNKQT (132 aa). ATP contacts are provided by residues threonine 40, 66-72, and threonine 95; that span reads GDGTINE. Mg(2+) is bound by residues leucine 215, aspartate 218, and leucine 220. Glutamate 271 functions as the Proton acceptor in the catalytic mechanism.

The protein belongs to the diacylglycerol/lipid kinase family. YegS lipid kinase subfamily. It depends on Mg(2+) as a cofactor. Requires Ca(2+) as cofactor.

The protein resides in the cytoplasm. Probably phosphorylates lipids; the in vivo substrate is unknown. The chain is Probable lipid kinase YegS from Shigella flexneri.